A 117-amino-acid chain; its full sequence is Large ribosomal subunit protein bL20 (117 aa).

Belongs to the bacterial ribosomal protein bL20 family.

Binds directly to 23S ribosomal RNA and is necessary for the in vitro assembly process of the 50S ribosomal subunit. It is not involved in the protein synthesizing functions of that subunit. This chain is Large ribosomal subunit protein bL20, found in Vibrio metschnikovii.